Consider the following 180-residue polypeptide: Large ribosomal subunit protein uL5 (180 aa).

The protein belongs to the universal ribosomal protein uL5 family. In terms of assembly, part of the 50S ribosomal subunit; part of the 5S rRNA/L5/L18/L25 subcomplex. Contacts the 5S rRNA and the P site tRNA. Forms a bridge to the 30S subunit in the 70S ribosome.

Functionally, this is one of the proteins that bind and probably mediate the attachment of the 5S RNA into the large ribosomal subunit, where it forms part of the central protuberance. In the 70S ribosome it contacts protein S13 of the 30S subunit (bridge B1b), connecting the 2 subunits; this bridge is implicated in subunit movement. Contacts the P site tRNA; the 5S rRNA and some of its associated proteins might help stabilize positioning of ribosome-bound tRNAs. The chain is Large ribosomal subunit protein uL5 from Leuconostoc citreum (strain KM20).